The primary structure comprises 291 residues: Secreted effector protein PipB (291 aa).

Pentapeptide repeat domains lie at 154–193 and 199–238; these read LNLR…NLVG and ANLH…ILFG.

Its subcellular location is the secreted. It localises to the host membrane. Its function is as follows. Effector proteins function to alter host cell physiology and promote bacterial survival in host tissues. Does not appear to be required for the formation or the maintenance of either Salmonella-containing vacuole (SCV) or the Salmonella-induced filaments (Sifs). Not required for intracellular replication in phagocytic cells. The sequence is that of Secreted effector protein PipB (pipB) from Salmonella typhimurium (strain LT2 / SGSC1412 / ATCC 700720).